A 533-amino-acid chain; its full sequence is Putative amidase C550.07 (533 aa).

Residues Lys-132 and Ser-207 each act as charge relay system in the active site. Residue Ser-231 is the Acyl-ester intermediate of the active site.

It belongs to the amidase family.

The protein resides in the cytoplasm. Its subcellular location is the nucleus. It carries out the reaction a monocarboxylic acid amide + H2O = a monocarboxylate + NH4(+). The chain is Putative amidase C550.07 from Schizosaccharomyces pombe (strain 972 / ATCC 24843) (Fission yeast).